The following is a 238-amino-acid chain: Large ribosomal subunit protein uL3 (238 aa).

Disordered regions lie at residues 140-164 (SHRS…KMPG) and 212-238 (LPKE…QEGA). Q151 carries the post-translational modification N5-methylglutamine. A compositionally biased stretch (low complexity) spans 225–238 (AGGEAEAAAQQEGA).

The protein belongs to the universal ribosomal protein uL3 family. In terms of assembly, part of the 50S ribosomal subunit. Forms a cluster with proteins L14 and L19. Post-translationally, methylated by PrmB.

Its function is as follows. One of the primary rRNA binding proteins, it binds directly near the 3'-end of the 23S rRNA, where it nucleates assembly of the 50S subunit. The sequence is that of Large ribosomal subunit protein uL3 from Bradyrhizobium diazoefficiens (strain JCM 10833 / BCRC 13528 / IAM 13628 / NBRC 14792 / USDA 110).